We begin with the raw amino-acid sequence, 254 residues long: PF03932 family protein CutC (254 aa).

Belongs to the CutC family.

It is found in the cytoplasm. This Yersinia enterocolitica serotype O:8 / biotype 1B (strain NCTC 13174 / 8081) protein is PF03932 family protein CutC.